The sequence spans 935 residues: Phosphoenolpyruvate carboxylase (935 aa).

Active-site residues include His-161 and Lys-593.

This sequence belongs to the PEPCase type 1 family. Mg(2+) serves as cofactor.

It carries out the reaction oxaloacetate + phosphate = phosphoenolpyruvate + hydrogencarbonate. Forms oxaloacetate, a four-carbon dicarboxylic acid source for the tricarboxylic acid cycle. This is Phosphoenolpyruvate carboxylase from Mycobacterium avium (strain 104).